The chain runs to 339 residues: D-erythrose-4-phosphate dehydrogenase (339 aa).

12–13 (RI) lines the NAD(+) pocket. Residues 154–156 (SCT), R200, 213–214 (TK), and R236 contribute to the substrate site. Residue C155 is the Nucleophile of the active site. N318 provides a ligand contact to NAD(+).

It belongs to the glyceraldehyde-3-phosphate dehydrogenase family. Epd subfamily. Homotetramer.

The protein localises to the cytoplasm. It carries out the reaction D-erythrose 4-phosphate + NAD(+) + H2O = 4-phospho-D-erythronate + NADH + 2 H(+). It functions in the pathway cofactor biosynthesis; pyridoxine 5'-phosphate biosynthesis; pyridoxine 5'-phosphate from D-erythrose 4-phosphate: step 1/5. Its function is as follows. Catalyzes the NAD-dependent conversion of D-erythrose 4-phosphate to 4-phosphoerythronate. This chain is D-erythrose-4-phosphate dehydrogenase, found in Photorhabdus laumondii subsp. laumondii (strain DSM 15139 / CIP 105565 / TT01) (Photorhabdus luminescens subsp. laumondii).